A 341-amino-acid polypeptide reads, in one-letter code: MKAEVREMKRQFGEIRLFPETLDDLWHLSHLVGPGDLVFATTFRSVEAATDKLRPEKVEKRPVRLGIWVEKVEFHQHTNRLRIAGIIESGVDVAAHHTLNVEAGFEISVVKRWRPVDCERIRRAVDASAYGVVHVVSVEEGEAQIYRLRQFGPEWVTTVTAGSSKGADTGTRSALFEKTLDTVAAVTGPLVVAGPGFVKDEFAEYVKVRAPDLAGRMVAVETRRIGRGAVQEVIGQGILDRLLGDLHLAREVALMDEVLVRIATEGAVAYGIDEVRKAVAYGAAETVLVADTLLRDDEATGVIEQAERVNATVVVLSTEFEPGERLDAIGGAAALLRYKIE.

It belongs to the eukaryotic release factor 1 family. Pelota subfamily. Monomer. The cofactor is a divalent metal cation.

The protein resides in the cytoplasm. In terms of biological role, may function in recognizing stalled ribosomes, interact with stem-loop structures in stalled mRNA molecules, and effect endonucleolytic cleavage of the mRNA. May play a role in the release non-functional ribosomes and degradation of damaged mRNAs. Has endoribonuclease activity. The protein is Protein pelota homolog of Methanoculleus marisnigri (strain ATCC 35101 / DSM 1498 / JR1).